Consider the following 647-residue polypeptide: Threonine--tRNA ligase (647 aa).

One can recognise a TGS domain in the interval 1 to 60 (MQVTIEDQSLEAAAGEACGQVLSRAVSGKRLKNAVACLVDGQPRDLAFPLPEDAHELALV). The segment at 242–533 (DHRKLGAQLD…LIEHTAGALP (292 aa)) is catalytic. Zn(2+)-binding residues include cysteine 334, histidine 385, and histidine 510.

This sequence belongs to the class-II aminoacyl-tRNA synthetase family. In terms of assembly, homodimer. It depends on Zn(2+) as a cofactor.

Its subcellular location is the cytoplasm. The enzyme catalyses tRNA(Thr) + L-threonine + ATP = L-threonyl-tRNA(Thr) + AMP + diphosphate + H(+). Catalyzes the attachment of threonine to tRNA(Thr) in a two-step reaction: L-threonine is first activated by ATP to form Thr-AMP and then transferred to the acceptor end of tRNA(Thr). Also edits incorrectly charged L-seryl-tRNA(Thr). The protein is Threonine--tRNA ligase of Solidesulfovibrio magneticus (strain ATCC 700980 / DSM 13731 / RS-1) (Desulfovibrio magneticus).